A 432-amino-acid polypeptide reads, in one-letter code: MGKKSIIILAAGAGTRMKSDTPKVLHKISGKPMLYYSIKEALKLSDDITVVLYHQFEKVKAEIEKYFSNINFVIQDHKNYPGTGGAVMGITPKYEKVLVLNGDMPLIQANELEKFEINATIVMSVLELESADGYGRVIIENGNVKKIVEQKDASEDELKITTANAGIYQFETKFLLENLPKLDNNNAQKEYYITDLVEMAISQGKVLKPLVVNEENFKGVNSKVELADAEVIHQNRIKKEFMKAGVIMRLPDTIYIEEGVEIEGESIIENGVSLLGNAKIINSHIKTNSVVEDSIVKDSDVGPMGRVRPGSELTNTHIGNFVETKKAKLTGVKAGHLSYLGDCSIDEGTNIGCGTITCNYDGVNKHQTIIGKNVFVGSDTQFVAPVNIEDDVLIGAGSTVTGNVKKGELYLTRAKAKTIDGFFYKHFSSKKK.

The pyrophosphorylase stretch occupies residues M1 to K223. UDP-N-acetyl-alpha-D-glucosamine contacts are provided by residues L9 to G12, K23, Q75, and G82 to T83. D103 provides a ligand contact to Mg(2+). 4 residues coordinate UDP-N-acetyl-alpha-D-glucosamine: G135, E149, N164, and N221. N221 is a binding site for Mg(2+). The linker stretch occupies residues V224–A244. The interval G245–K432 is N-acetyltransferase. UDP-N-acetyl-alpha-D-glucosamine-binding residues include R308 and K325. The active-site Proton acceptor is the H336. UDP-N-acetyl-alpha-D-glucosamine contacts are provided by Y339 and N350. Acetyl-CoA is bound by residues N359–Y360, S378, A396, and R413.

The protein in the N-terminal section; belongs to the N-acetylglucosamine-1-phosphate uridyltransferase family. This sequence in the C-terminal section; belongs to the transferase hexapeptide repeat family. As to quaternary structure, homotrimer. Requires Mg(2+) as cofactor.

The protein localises to the cytoplasm. The catalysed reaction is alpha-D-glucosamine 1-phosphate + acetyl-CoA = N-acetyl-alpha-D-glucosamine 1-phosphate + CoA + H(+). It carries out the reaction N-acetyl-alpha-D-glucosamine 1-phosphate + UTP + H(+) = UDP-N-acetyl-alpha-D-glucosamine + diphosphate. Its pathway is nucleotide-sugar biosynthesis; UDP-N-acetyl-alpha-D-glucosamine biosynthesis; N-acetyl-alpha-D-glucosamine 1-phosphate from alpha-D-glucosamine 6-phosphate (route II): step 2/2. It functions in the pathway nucleotide-sugar biosynthesis; UDP-N-acetyl-alpha-D-glucosamine biosynthesis; UDP-N-acetyl-alpha-D-glucosamine from N-acetyl-alpha-D-glucosamine 1-phosphate: step 1/1. The protein operates within bacterial outer membrane biogenesis; LPS lipid A biosynthesis. Its function is as follows. Catalyzes the last two sequential reactions in the de novo biosynthetic pathway for UDP-N-acetylglucosamine (UDP-GlcNAc). The C-terminal domain catalyzes the transfer of acetyl group from acetyl coenzyme A to glucosamine-1-phosphate (GlcN-1-P) to produce N-acetylglucosamine-1-phosphate (GlcNAc-1-P), which is converted into UDP-GlcNAc by the transfer of uridine 5-monophosphate (from uridine 5-triphosphate), a reaction catalyzed by the N-terminal domain. The chain is Bifunctional protein GlmU from Aliarcobacter butzleri (strain RM4018) (Arcobacter butzleri).